Consider the following 871-residue polypeptide: Metabotropic glutamate receptor 6 (871 aa).

The N-terminal stretch at 1–23 (MGRLRVLLLWLAWWLSQAGIAHG) is a signal peptide. The Extracellular segment spans residues 24–579 (AGSVRLAGGL…VVRLTWSSPW (556 aa)). C51 and C93 are disulfide-bonded. L-glutamate is bound by residues S148, 169 to 171 (AST), and Y219. 7 disulfides stabilise this stretch: C238–C530, C361–C377, C417–C424, C512–C531, C516–C534, C537–C549, and C552–C565. N-linked (GlcNAc...) asparagine glycosylation occurs at N290. D301 provides a ligand contact to L-glutamate. K394 contributes to the L-glutamate binding site. Residues N445 and N473 are each glycosylated (N-linked (GlcNAc...) asparagine). N-linked (GlcNAc...) asparagine glycosylation occurs at N561. A helical transmembrane segment spans residues 580–602 (AALPLLLAVLGIMATTTIIATFM). Topologically, residues 603-616 (RHNDTPIVRASGRE) are cytoplasmic. A helical transmembrane segment spans residues 617 to 637 (LSYVLLTGIFLIYAITFLMVA). Residues 638-648 (EPCAAVCASRR) are Extracellular-facing. Residues 649–667 (LLLGLGTTLSYSALLTKTN) form a helical membrane-spanning segment. The Cytoplasmic segment spans residues 668–691 (RIYRIFEQGKRSVTPPPFISPTSQ). A helical transmembrane segment spans residues 692-712 (LVITFGLTSLQVVGVIAWLGA). Topologically, residues 713–742 (QPPHSVIDYEEQRTVDPEQARGVLKCDMSD) are extracellular. Residues 743 to 764 (LSLIGCLGYSLLLMVTCTVYAI) traverse the membrane as a helical segment. Residues 765 to 777 (KARGVPETFNEAK) lie on the Cytoplasmic side of the membrane. The helical transmembrane segment at 778 to 800 (PIGFTMYTTCIIWLAFVPIFFGT) threads the bilayer. At 801–813 (AQSAEKIYIQTTT) the chain is on the extracellular side. The helical transmembrane segment at 814-839 (LTVSLSLSASVSLGMLYVPKTYVILF) threads the bilayer. At 840 to 871 (HPEQNVQKRKRSLKKTSTMAAPPKSENSEDAK) the chain is on the cytoplasmic side. The interval 848-871 (RKRSLKKTSTMAAPPKSENSEDAK) is disordered.

Belongs to the G-protein coupled receptor 3 family. As to quaternary structure, homodimer. Interacts with GPR179. Interacts with photoreceptor synaptic protein LRIT1 (via its N-terminal extracellular domain). As to expression, detected in the outer plexiform layer in retina (at protein level).

It localises to the cell membrane. The protein resides in the endoplasmic reticulum membrane. Its subcellular location is the golgi apparatus membrane. The protein localises to the cell projection. It is found in the dendrite. Its function is as follows. G-protein coupled receptor for glutamate. Ligand binding causes a conformation change that triggers signaling via guanine nucleotide-binding proteins (G proteins) and modulates the activity of down-stream effectors, such as adenylate cyclase. Signaling inhibits adenylate cyclase activity. Signaling stimulates TRPM1 channel activity and Ca(2+) uptake. Required for normal vision. This chain is Metabotropic glutamate receptor 6 (Grm6), found in Mus musculus (Mouse).